A 1277-amino-acid polypeptide reads, in one-letter code: Neural cell adhesion molecule L1 (1277 aa).

A signal peptide spans 1-34 (MAHTQRQQGGSRGQWSRCLLLLLLLPLAAQPGRA). At 35–1135 (AIQIPSSYYI…VQPSFATQGW (1101 aa)) the chain is on the extracellular side. 5 Ig-like C2-type domains span residues 51–140 (PAIT…TAVS), 150–241 (PPVQ…EPIT), 256–344 (PQMM…YTVT), 349–437 (PYWT…TNVY), and 443–528 (PQIL…AEVE). 5 disulfides stabilise this stretch: C72–C129, C173–C224, C280–C328, C370–C421, and C465–C514. An N-linked (GlcNAc...) asparagine glycan is attached at N317. N503, N520, and N531 each carry an N-linked (GlcNAc...) asparagine glycan. The region spanning 532–623 (RTVILSPPQA…DMVEASSTLT (92 aa)) is the Ig-like C2-type 6 domain. C554 and C607 are joined by a disulfide. Fibronectin type-III domains follow at residues 630 to 725 (PPVH…TPAD), 730 to 824 (NPED…SGED), 829 to 931 (APLN…TPEG), 935 to 1030 (PPMS…TLEG), and 1032 to 1129 (PPAN…VQPS). The disordered stretch occupies residues 714–740 (SKLSDLYKTPADAPDSNPEDVRSESTD). N-linked (GlcNAc...) asparagine glycosylation is found at N794 and N839. Residues N1035, N1046, N1068, N1083, and N1108 are each glycosylated (N-linked (GlcNAc...) asparagine). Residues 1136–1156 (FIGVVSAVVLLLLVLLILCFI) form a helical membrane-spanning segment. The Cytoplasmic segment spans residues 1157-1277 (KRSKGGKYSV…ATNGAPSFLN (121 aa)). Disordered regions lie at residues 1163–1216 (KYSV…LCSE) and 1232–1277 (NMDE…SFLN). Residues 1165–1201 (SVKDKEDGPMDSEARPMKDETFGEYRSLESDLEEKRT) are compositionally biased toward basic and acidic residues. The segment covering 1232 to 1242 (NMDESLASQFS) has biased composition (polar residues). The span at 1255-1277 (PDNSPLNPAANPPATNGAPSFLN) shows a compositional bias: low complexity.

This sequence belongs to the immunoglobulin superfamily. L1/neurofascin/NgCAM family.

It localises to the cell membrane. It is found in the cell projection. Its subcellular location is the growth cone. Functionally, neural cell adhesion molecule involved in the dynamics of cell adhesion and in the generation of transmembrane signals at tyrosine kinase receptors. During brain development, critical in multiple processes, including neuronal migration, axonal growth and fasciculation, and synaptogenesis. In the mature brain, plays a role in the dynamics of neuronal structure and function, including synaptic plasticity. The protein is Neural cell adhesion molecule L1 (l1cam) of Takifugu rubripes (Japanese pufferfish).